A 25-amino-acid chain; its full sequence is Tubulin alpha chain (25 aa).

Q11 is a binding site for GTP.

It belongs to the tubulin family. As to quaternary structure, dimer of alpha and beta chains. A typical microtubule is a hollow water-filled tube with an outer diameter of 25 nm and an inner diameter of 15 nM. Alpha-beta heterodimers associate head-to-tail to form protofilaments running lengthwise along the microtubule wall with the beta-tubulin subunit facing the microtubule plus end conferring a structural polarity. Microtubules usually have 13 protofilaments but different protofilament numbers can be found in some organisms and specialized cells. It depends on Mg(2+) as a cofactor.

The protein resides in the cytoplasm. Its subcellular location is the cytoskeleton. The enzyme catalyses GTP + H2O = GDP + phosphate + H(+). Tubulin is the major constituent of microtubules, a cylinder consisting of laterally associated linear protofilaments composed of alpha- and beta-tubulin heterodimers. Microtubules grow by the addition of GTP-tubulin dimers to the microtubule end, where a stabilizing cap forms. Below the cap, tubulin dimers are in GDP-bound state, owing to GTPase activity of alpha-tubulin. In Leptomonas seymouri, this protein is Tubulin alpha chain.